Consider the following 377-residue polypeptide: Probable tRNA pseudouridine synthase D (377 aa).

The Nucleophile role is filled by aspartate 89. A TRUD domain is found at 160–377 (YLPAFIGYQR…ILRGDPRKFT (218 aa)).

Belongs to the pseudouridine synthase TruD family.

The catalysed reaction is uridine(13) in tRNA = pseudouridine(13) in tRNA. Its function is as follows. Could be responsible for synthesis of pseudouridine from uracil-13 in transfer RNAs. The chain is Probable tRNA pseudouridine synthase D from Saccharolobus solfataricus (strain ATCC 35092 / DSM 1617 / JCM 11322 / P2) (Sulfolobus solfataricus).